A 159-amino-acid chain; its full sequence is GKATTKKVEIPERDRYDNGYDNHGHDDFEHDQTEVDIQEVVRKEKESYDHNERDIYGNARNDFEHVQTEVDIQEVVRKEKESYDHNIGDRYGNIHDDFEHDQTEVDIQEVVRKEEESYDRNEGDRYGNGHDDFEHDQTEVDIQEVVRKEKESYAHKYRR.

Disordered regions lie at residues 1–33 (GKAT…HDQT) and 80–159 (KESY…KYRR).

As to expression, component of the organic matrix of calcified shell layers.

The protein is Gigasin-1 of Magallana gigas (Pacific oyster).